The sequence spans 1502 residues: Leucine-rich repeat-containing protein 9 (1502 aa).

LRR repeat units follow at residues 53–79 (FPNL…HFLK), 97–119 (CADL…LENL), 120–141 (LKLE…LDMM), 142–164 (QNLK…LDPN), 166–188 (QLER…NLAR), 224–247 (LQRL…TVVK), 296–320 (EHEL…KFHE), 699–721 (YSQI…ISRL), 722–744 (NGLR…SYLT), 746–764 (LEYL…GFKG), 765–790 (LGKL…ILRK), 792–814 (AIQL…VLKD), 822–849 (LTHL…RITQ), 894–916 (YTKI…LEKL), 917–938 (VNLR…LEHC), 939–960 (VNLE…LSKL), 961–983 (TKLR…VIES), 985–1009 (SHLH…GYKL), 1011–1030 (ELYL…SLKG), 1031–1053 (LNNL…NYRL), 1100–1123 (FTEL…PADH), 1124–1146 (FRNV…LIFL), 1147–1170 (PNIK…KSQS), 1209–1232 (MQSL…QLGR), 1234–1255 (RNLK…LENL), 1256–1278 (QFLR…SFAK), 1280–1301 (NSLV…LPPL), 1302–1325 (LKLR…KLEV), and 1327–1351 (PALV…LLVV). Residues 317 to 342 (KFHENNCDTEESNSQQSSERRKNNSD) form a disordered region. Positions 1479 to 1496 (TQQSGQARSQQKHPFNQE) are enriched in polar residues. Residues 1479–1502 (TQQSGQARSQQKHPFNQENEGRCV) are disordered.

This is Leucine-rich repeat-containing protein 9 (lrrc9) from Xenopus tropicalis (Western clawed frog).